A 474-amino-acid polypeptide reads, in one-letter code: NAD(P) transhydrogenase subunit beta (474 aa).

The next 9 membrane-spanning stretches (helical) occupy residues 4–24, 46–66, 83–103, 132–152, 181–200, 202–222, 229–249, 253–273, and 321–341; these read GLVQAAYILAALLFIMSLAGL, IATIFGPHSEGTFWIIIAMII, MPELVAILHSFVGLAAVLVGF, VLTNIHNVEVFLGIFIGAVTF, LAALVVSALLMVAFLNNPES, FPVLLMTAIALAFGWHLVASI, VVVSMLNSYSGWAAAAAGFIL, LLIVTGALVGSSGAILSYIMC, and VIITPGYGMAVAQAQYPVADI.

Belongs to the PNT beta subunit family. In terms of assembly, heterodimer of an alpha and a beta chain.

It is found in the cell inner membrane. It catalyses the reaction NAD(+) + NADPH + H(+)(in) = NADH + NADP(+) + H(+)(out). In terms of biological role, the transhydrogenation between NADH and NADP is coupled to respiration and ATP hydrolysis and functions as a proton pump across the membrane. The sequence is that of NAD(P) transhydrogenase subunit beta (pntB) from Haemophilus influenzae (strain ATCC 51907 / DSM 11121 / KW20 / Rd).